A 218-amino-acid chain; its full sequence is Adenylate kinase (218 aa).

10–15 (GVGKGT) is an ATP binding site. An NMP region spans residues 30–59 (STGDMLRSAIKQGTELGLKAKSFIDKGELV). Residues Thr31, Arg36, 57 to 59 (ELV), 86 to 89 (GFPR), and Gln93 contribute to the AMP site. The segment at 127 to 164 (GRRIAPSTGKVYHVVYNPPKVEGKCDETGEDLIIREDD) is LID. Residues Arg128 and 137-138 (VY) each bind ATP. Residues Arg161 and Arg172 each coordinate AMP. Gln200 contacts ATP.

Belongs to the adenylate kinase family. As to quaternary structure, monomer.

Its subcellular location is the cytoplasm. It catalyses the reaction AMP + ATP = 2 ADP. It functions in the pathway purine metabolism; AMP biosynthesis via salvage pathway; AMP from ADP: step 1/1. Functionally, catalyzes the reversible transfer of the terminal phosphate group between ATP and AMP. Plays an important role in cellular energy homeostasis and in adenine nucleotide metabolism. This chain is Adenylate kinase, found in Chloroherpeton thalassium (strain ATCC 35110 / GB-78).